Consider the following 60-residue polypeptide: Cytotoxin 7 (60 aa).

4 disulfides stabilise this stretch: cysteine 3–cysteine 21, cysteine 14–cysteine 38, cysteine 42–cysteine 53, and cysteine 54–cysteine 59.

The protein belongs to the three-finger toxin family. Short-chain subfamily. Type IA cytotoxin sub-subfamily. As to quaternary structure, monomer in solution; Homodimer and oligomer in the presence of negatively charged lipids forming a pore with a size ranging between 20 and 30 Angstroms. Expressed by the venom gland.

The protein resides in the secreted. It is found in the target cell membrane. Its function is as follows. Shows cytolytic activity on many different cells by forming pore in lipid membranes. In vivo, increases heart rate or kills the animal by cardiac arrest. In addition, it binds to heparin with high affinity, interacts with Kv channel-interacting protein 1 (KCNIP1) in a calcium-independent manner, and binds to integrin alpha-V/beta-3 (ITGAV/ITGB3) with moderate affinity. Preferentially binds acidic phospholipids like phosphatidylserine, phosphatidic acid and phosphatidyl glycerol. Has hemolytic activity towards human erythrocytes (EC(50)=0.171 uM) and cytolytic activity towards various cell lines. This chain is Cytotoxin 7, found in Naja naja (Indian cobra).